The primary structure comprises 221 residues: Large ribosomal subunit protein uL4 (221 aa).

Residues 47–77 (GTASTKTRGEVSGGGRKPWIQKHTGRARQGS) form a disordered region.

The protein belongs to the universal ribosomal protein uL4 family. In terms of assembly, part of the 50S ribosomal subunit.

In terms of biological role, one of the primary rRNA binding proteins, this protein initially binds near the 5'-end of the 23S rRNA. It is important during the early stages of 50S assembly. It makes multiple contacts with different domains of the 23S rRNA in the assembled 50S subunit and ribosome. Forms part of the polypeptide exit tunnel. This Thermosipho melanesiensis (strain DSM 12029 / CIP 104789 / BI429) protein is Large ribosomal subunit protein uL4.